Here is a 232-residue protein sequence, read N- to C-terminus: Small ribosomal subunit protein uS3 (232 aa).

One can recognise a KH type-2 domain in the interval 39 to 107; sequence IREILHKELK…DVVINIVEIR (69 aa).

It belongs to the universal ribosomal protein uS3 family. Part of the 30S ribosomal subunit. Forms a tight complex with proteins S10 and S14.

Functionally, binds the lower part of the 30S subunit head. Binds mRNA in the 70S ribosome, positioning it for translation. This is Small ribosomal subunit protein uS3 from Rhodopseudomonas palustris (strain BisB18).